The sequence spans 645 residues: MLGVCYYPEHWPKARWKEDARRMREAGLSYVRVGEFAWALLEPEPGRLEWGWLDEALATLAAEGLKVVLGTPTATPPKWLVDRYPEVLPVDREGRRRRFGGRRHYCFSSPAYREEARRIVTLLAERYGGLEAVAGFQTDNEYGCHGTVRCYCPRCQEAFRGWLKARYGTIEALNEAWGTAFWSQRYRNFTEVELPHLTVAEPNPSHLLDYYRFASDQVRAFNRLQVEILRAHAPGKFITHNFMGFFTDLDAFALAQDLDFASWDSYPLGFTDLMPLPPEEKLRYARTGHPDVAAFHHDLYRGVGRGRFWVMEQQPGPVNWAPHNPSPTPGMVRLWTWEALAHGAEVVSYFRWRQAPFAQEQMHAGLHRPDSAPDQGFFEAKQVAEELAALALPPVAQAPVALVFDYEAAWVYEVQPQGAEWSYLGLIYLFYSALRRLGLDVDVVPPGASLRGYALTVVPSLPIVRGEALKAFQEAEGIVLFGPRSGSKTETFQIPRELPPGPLQALLPLKVVRVESLPPGLLEVAEGPMGRFSLGLWREWVESPLRPWLAFADGGGALYREGRYLYLAAWPSPELLGVLLAGLAQEAGLRPVFLPEGLRLRRRGPWVFAFNYGPEAVEAPAPEGARFLLGGKRVGPYDLAVWEEA.

Residue Arg102 participates in substrate binding. Cys106 lines the Zn(2+) pocket. Substrate is bound at residue Asn140. Catalysis depends on Glu141, which acts as the Proton donor. 3 residues coordinate Zn(2+): Cys150, Cys152, and Cys155. Glu312 serves as the catalytic Nucleophile. Substrate-binding positions include Trp320 and 360 to 363 (EQMH).

This sequence belongs to the glycosyl hydrolase 42 family.

The catalysed reaction is Hydrolysis of terminal non-reducing beta-D-galactose residues in beta-D-galactosides.. In terms of biological role, hydrolyzes chromogen 5-bromo-4-chloro-3-indolyl-beta-D-galactopyranoside (X-Gal) and p-nitrophenyl-beta-D-galactoside (pNPGal). The polypeptide is Beta-galactosidase BgaA (Thermus sp).